We begin with the raw amino-acid sequence, 358 residues long: Alanine racemase (358 aa).

Catalysis depends on K35, which acts as the Proton acceptor; specific for D-alanine. At K35 the chain carries N6-(pyridoxal phosphate)lysine. R130 is a substrate binding site. Residue Y255 is the Proton acceptor; specific for L-alanine of the active site. M303 provides a ligand contact to substrate.

Belongs to the alanine racemase family. Requires pyridoxal 5'-phosphate as cofactor.

It carries out the reaction L-alanine = D-alanine. It participates in amino-acid biosynthesis; D-alanine biosynthesis; D-alanine from L-alanine: step 1/1. Functionally, catalyzes the interconversion of L-alanine and D-alanine. May also act on other amino acids. The protein is Alanine racemase (alr) of Shewanella baltica (strain OS195).